The following is a 207-amino-acid chain: Ribosomal RNA large subunit methyltransferase E (207 aa).

S-adenosyl-L-methionine is bound by residues G60, W62, D80, D96, and D121. K161 serves as the catalytic Proton acceptor.

Belongs to the class I-like SAM-binding methyltransferase superfamily. RNA methyltransferase RlmE family.

The protein resides in the cytoplasm. The catalysed reaction is uridine(2552) in 23S rRNA + S-adenosyl-L-methionine = 2'-O-methyluridine(2552) in 23S rRNA + S-adenosyl-L-homocysteine + H(+). Functionally, specifically methylates the uridine in position 2552 of 23S rRNA at the 2'-O position of the ribose in the fully assembled 50S ribosomal subunit. In Thioalkalivibrio sulfidiphilus (strain HL-EbGR7), this protein is Ribosomal RNA large subunit methyltransferase E.